Reading from the N-terminus, the 296-residue chain is MEETPPPMQAGSKPHLEKLTLGVTRILESSPGVTEVSIIEKLPAERHMISSWEQKNNCVMPEDVRNFYLMTNGFHMTWSVKLDDHIIPLGSMVINGISKLTQLIQSSVYSLPNAPTLADLEDDSQEGNEDHQLEKPHFDCRSAIFELDSCGGNGKVCLVYKNGKPGLAHDTEIWFLDRALYWHFLTDTFTAYYRLLITHLGLPQWQYAFTSYGISPQAKQWFSMYKPITYNTSLLTEEPDTFVNKLDPSKVFKSKNKILIPKKKGPVQPVSGQKGPGPLAPPTSKPSAGCGNPVRK.

The interval 257–296 is disordered; sequence KILIPKKKGPVQPVSGQKGPGPLAPPTSKPSAGCGNPVRK.

As to quaternary structure, part of the neuronal tubulin polyglutamylase complex which contains TPGS1, TPGS2, TTLL1, LRRC49 and NICN1. Interacts with CSTPP1 and LRRC49.

The protein resides in the cytoplasm. The protein localises to the cytoskeleton. Its subcellular location is the microtubule organizing center. It localises to the centrosome. It is found in the centriolar satellite. Its function is as follows. Subunit of the tubulin polyglutamylase complex (TPGC). The complex mediates cilia and flagella polyglutamylation which is essential for their biogenesis and motility. This Rattus norvegicus (Rat) protein is Tubulin polyglutamylase complex subunit 2 (Tpgs2).